The primary structure comprises 30 residues: Putative cytochrome bd-II ubiquinol oxidase subunit AppX (30 aa).

The chain crosses the membrane as a helical span at residues 4–24 (LLWFVGILLMCSLSTLVLVWL).

It belongs to the cytochrome ubiquinol oxidase subunit X family. As to quaternary structure, able to interact with CydA and CydB upon overexpression.

Its subcellular location is the cell inner membrane. Might be part of cytochrome bd-II oxidase (appB and appC). Able to restore reductant resistance to a cydX deletion mutant upon overexpression. CydX and this protein may have some functional overlap. This Escherichia coli (strain K12) protein is Putative cytochrome bd-II ubiquinol oxidase subunit AppX (appX).